The following is a 731-amino-acid chain: Catalase-peroxidase (731 aa).

Positions 98–226 (WHAAGTYRTA…LAAVQMGLIY (129 aa)) form a cross-link, tryptophyl-tyrosyl-methioninium (Trp-Tyr) (with M-252). Residue His-99 is the Proton acceptor of the active site. The tryptophyl-tyrosyl-methioninium (Tyr-Met) (with W-98) cross-link spans 226–252 (YVNPEGPDGNPDIVASGHDVIETFGRM). His-267 contacts heme b.

It belongs to the peroxidase family. Peroxidase/catalase subfamily. In terms of assembly, homodimer or homotetramer. The cofactor is heme b. Post-translationally, formation of the three residue Trp-Tyr-Met cross-link is important for the catalase, but not the peroxidase activity of the enzyme.

It carries out the reaction H2O2 + AH2 = A + 2 H2O. It catalyses the reaction 2 H2O2 = O2 + 2 H2O. Bifunctional enzyme with both catalase and broad-spectrum peroxidase activity. This chain is Catalase-peroxidase, found in Ruegeria pomeroyi (strain ATCC 700808 / DSM 15171 / DSS-3) (Silicibacter pomeroyi).